The following is a 556-amino-acid chain: Hydroxylamine reductase (556 aa).

4 residues coordinate [4Fe-4S] cluster: C5, C8, C17, and C23. Hybrid [4Fe-2O-2S] cluster is bound by residues H249, E273, C317, C409, C437, C462, E497, and K499. C409 bears the Cysteine persulfide mark.

The protein belongs to the HCP family. [4Fe-4S] cluster is required as a cofactor. It depends on hybrid [4Fe-2O-2S] cluster as a cofactor.

It is found in the cytoplasm. The enzyme catalyses A + NH4(+) + H2O = hydroxylamine + AH2 + H(+). In terms of biological role, catalyzes the reduction of hydroxylamine to form NH(3) and H(2)O. This is Hydroxylamine reductase from Kosmotoga olearia (strain ATCC BAA-1733 / DSM 21960 / TBF 19.5.1).